Consider the following 66-residue polypeptide: UPF0370 protein CKO_00315 (66 aa).

The helical transmembrane segment at 4 to 24 (LAKYWWILVLVFLVGVLINVI) threads the bilayer. Residues 39 to 66 (KPELPPHRDFNDKWDDDDDWPKKDQPKK) form a disordered region. Positions 42–51 (LPPHRDFNDK) are enriched in basic and acidic residues.

The protein belongs to the UPF0370 family.

Its subcellular location is the cell membrane. This Citrobacter koseri (strain ATCC BAA-895 / CDC 4225-83 / SGSC4696) protein is UPF0370 protein CKO_00315.